The chain runs to 189 residues: dCTP deaminase (189 aa).

DCTP contacts are provided by residues 112–117 (KSTYAR), 136–138 (TLE), Gln-157, Tyr-171, and Gln-181. The Proton donor/acceptor role is filled by Glu-138.

This sequence belongs to the dCTP deaminase family. In terms of assembly, homotrimer.

The enzyme catalyses dCTP + H2O + H(+) = dUTP + NH4(+). Its pathway is pyrimidine metabolism; dUMP biosynthesis; dUMP from dCTP (dUTP route): step 1/2. In terms of biological role, catalyzes the deamination of dCTP to dUTP. This chain is dCTP deaminase, found in Xanthomonas euvesicatoria pv. vesicatoria (strain 85-10) (Xanthomonas campestris pv. vesicatoria).